The sequence spans 788 residues: MSLPPHLCVPIDILMIDNFDSFTWNLYQSLCLLGADVTVIRNDAIPRSAIPQLRIKRLIVSPGPGHPQTDSGISREAIKYFAGKVPIMGVCMGLECVVDVFGGQIAYAGEIMHGKVSGIRHDARGCFKDLPQGIQSTRYHSLSAGVKTLPDELAVTAVTEHERVIMGIRHRKYTVEAVQYHPESILSESGDDLLRHFMKLKGGTWEENPEFRVLDPSLPAFEIGSQPAASTSAKIPTILEKICAQRQKDVDQAKATPGTTPEDLKTLLSMKLSPPQISFPDRLKAAEVKPALMAEVKRASPSKGPIAMNGNAAQQALTYALAGASVISVLTEPTWFKGSLLDMRLARQAIDNLPHRPAILRKDFIIDEYQIDEARLHGADTVLLIVATLTEKRLEELYAYSQSLGMEPLVEVNNAKEMEIALKLGAKVIGVNNRNLHDFNVDMGTTSRLAEMVRERDVILCALSGIKDAQDVNTYVEQGVGAVLVGESLMRAPDTRAFIRQLLSIPESEAKGKGKETTPLSRSCGIRTEEEALAAAEAGADMLGLMFVPKSKRYVSLEKAQQIAAAIHSRRLSKPVLTSGKTLENEPWFTAQQPPSRSFVWRFAARPLLVGVFQNQPLSVYLTPCVPQLDLVQLHGSEPAELAKHYPVPVIRVFHVSADGRGLADLARPGLHQFALLDAVLPGSASALSGGTGTTVDWALARDAVRSGEVRVARSAQGDGPVLSLNSSEALYPMPVILAGGPQPENVSEAVDTVAPWAVDVSGGVELEDGSGKDLEKVRAFVKAAKKL.

Residues 12–207 (DILMIDNFDS…MKLKGGTWEE (196 aa)) enclose the Glutamine amidotransferase type-1 domain. 63–65 (GPG) provides a ligand contact to L-glutamine. The active-site Nucleophile; for GATase activity is cysteine 91. 141 to 142 (SL) contributes to the L-glutamine binding site. Catalysis depends on for GATase activity residues histidine 181 and glutamate 183. The tract at residues 238–503 (ILEKICAQRQ…DTRAFIRQLL (266 aa)) is indole-3-glycerol phosphate synthase. The tract at residues 520 to 788 (LSRSCGIRTE…RAFVKAAKKL (269 aa)) is N-(5'-phosphoribosyl)anthranilate isomerase.

The catalysed reaction is N-(5-phospho-beta-D-ribosyl)anthranilate = 1-(2-carboxyphenylamino)-1-deoxy-D-ribulose 5-phosphate. It catalyses the reaction 1-(2-carboxyphenylamino)-1-deoxy-D-ribulose 5-phosphate + H(+) = (1S,2R)-1-C-(indol-3-yl)glycerol 3-phosphate + CO2 + H2O. It carries out the reaction chorismate + L-glutamine = anthranilate + pyruvate + L-glutamate + H(+). It functions in the pathway amino-acid biosynthesis; L-tryptophan biosynthesis; L-tryptophan from chorismate: step 1/5. It participates in amino-acid biosynthesis; L-tryptophan biosynthesis; L-tryptophan from chorismate: step 3/5. The protein operates within amino-acid biosynthesis; L-tryptophan biosynthesis; L-tryptophan from chorismate: step 4/5. Functionally, trifunctional enzyme bearing the Gln amidotransferase (GATase) domain of anthranilate synthase, indole-glycerolphosphate synthase, and phosphoribosylanthranilate isomerase activities. The chain is Multifunctional tryptophan biosynthesis protein (TRPC) from Phanerodontia chrysosporium (White-rot fungus).